We begin with the raw amino-acid sequence, 267 residues long: Dihydropteroate synthase (267 aa).

The 251-residue stretch at 1 to 251 folds into the Pterin-binding domain; it reads MTKTKIIGIL…NVDLNVKLAQ (251 aa). Asn-11 contacts Mg(2+). Residues Thr-51, Asp-84, Asn-103, Asp-167, Lys-203, and 239 to 241 contribute to the (7,8-dihydropterin-6-yl)methyl diphosphate site; that span reads RVH.

This sequence belongs to the DHPS family. Requires Mg(2+) as cofactor.

The catalysed reaction is (7,8-dihydropterin-6-yl)methyl diphosphate + 4-aminobenzoate = 7,8-dihydropteroate + diphosphate. It participates in cofactor biosynthesis; tetrahydrofolate biosynthesis; 7,8-dihydrofolate from 2-amino-4-hydroxy-6-hydroxymethyl-7,8-dihydropteridine diphosphate and 4-aminobenzoate: step 1/2. In terms of biological role, catalyzes the condensation of para-aminobenzoate (pABA) with 6-hydroxymethyl-7,8-dihydropterin diphosphate (DHPt-PP) to form 7,8-dihydropteroate (H2Pte), the immediate precursor of folate derivatives. The polypeptide is Dihydropteroate synthase (folP) (Staphylococcus haemolyticus).